A 494-amino-acid chain; its full sequence is Aspartyl/glutamyl-tRNA(Asn/Gln) amidotransferase subunit B (494 aa).

Belongs to the GatB/GatE family. GatB subfamily. As to quaternary structure, heterotrimer of A, B and C subunits.

The catalysed reaction is L-glutamyl-tRNA(Gln) + L-glutamine + ATP + H2O = L-glutaminyl-tRNA(Gln) + L-glutamate + ADP + phosphate + H(+). The enzyme catalyses L-aspartyl-tRNA(Asn) + L-glutamine + ATP + H2O = L-asparaginyl-tRNA(Asn) + L-glutamate + ADP + phosphate + 2 H(+). In terms of biological role, allows the formation of correctly charged Asn-tRNA(Asn) or Gln-tRNA(Gln) through the transamidation of misacylated Asp-tRNA(Asn) or Glu-tRNA(Gln) in organisms which lack either or both of asparaginyl-tRNA or glutaminyl-tRNA synthetases. The reaction takes place in the presence of glutamine and ATP through an activated phospho-Asp-tRNA(Asn) or phospho-Glu-tRNA(Gln). The chain is Aspartyl/glutamyl-tRNA(Asn/Gln) amidotransferase subunit B from Synechococcus sp. (strain WH7803).